Here is a 147-residue protein sequence, read N- to C-terminus: UPF0735 ACT domain-containing protein BPUM_2431 (147 aa).

The ACT domain maps to 70 to 145 (TLFFHLEDRS…FVEKVEILGS (76 aa)).

This sequence belongs to the UPF0735 family.

The polypeptide is UPF0735 ACT domain-containing protein BPUM_2431 (Bacillus pumilus (strain SAFR-032)).